A 599-amino-acid polypeptide reads, in one-letter code: Leishmanolysin (599 aa).

The first 39 residues, 1 to 39 (MSVDSSSTHRHRSVAARLVRLAAAGAAVIAAVGTAAAWA), serve as a signal peptide directing secretion. A propeptide spans 40–97 (HAGAVQHRCIHDAMQARVRQSVARHHTAPGAVSAVGLPYVTLDTAAAADRRPGSAPTV) (activation peptide). 2 disulfides stabilise this stretch: Cys122-Cys139 and Cys188-Cys227. His261 serves as a coordination point for Zn(2+). The active site involves Glu262. His265 contributes to the Zn(2+) binding site. The N-linked (GlcNAc...) asparagine glycan is linked to Asn297. Cystine bridges form between Cys311-Cys383, Cys390-Cys452, Cys403-Cys422, Cys412-Cys486, Cys463-Cys507, Cys512-Cys562, and Cys532-Cys555. His331 is a binding site for Zn(2+). Asn394 is a glycosylation site (N-linked (GlcNAc...) asparagine). Asn574 carries GPI-anchor amidated asparagine lipidation. The propeptide at 575-599 (AAAGRRGPRAAATALLVAALLAVAL) is removed in mature form.

It belongs to the peptidase M8 family. Zn(2+) is required as a cofactor.

It localises to the cell membrane. It carries out the reaction Preference for hydrophobic residues at P1 and P1' and basic residues at P2' and P3'. A model nonapeptide is cleaved at -Ala-Tyr-|-Leu-Lys-Lys-.. Its function is as follows. Has an integral role during the infection of macrophages in the mammalian host. The polypeptide is Leishmanolysin (gp63) (Leishmania chagasi).